Consider the following 330-residue polypeptide: Phenylalanine--tRNA ligase alpha subunit (330 aa).

Mg(2+) is bound at residue E246.

The protein belongs to the class-II aminoacyl-tRNA synthetase family. Phe-tRNA synthetase alpha subunit type 1 subfamily. As to quaternary structure, tetramer of two alpha and two beta subunits. Requires Mg(2+) as cofactor.

It is found in the cytoplasm. It carries out the reaction tRNA(Phe) + L-phenylalanine + ATP = L-phenylalanyl-tRNA(Phe) + AMP + diphosphate + H(+). This is Phenylalanine--tRNA ligase alpha subunit from Sulfurovum sp. (strain NBC37-1).